The chain runs to 162 residues: Peptide deformylase-like (162 aa).

Belongs to the polypeptide deformylase family.

The protein is Peptide deformylase-like of Staphylococcus epidermidis (strain ATCC 35984 / DSM 28319 / BCRC 17069 / CCUG 31568 / BM 3577 / RP62A).